The primary structure comprises 459 residues: Serine protease HTRA3 (459 aa).

Positions 1-23 are cleaved as a signal peptide; sequence MQARALLPATLAILATLAVLALA. The 64-residue stretch at 27–90 folds into the IGFBP N-terminal domain; it reads PAAPCPARCD…ECVRGVCRCR (64 aa). Disulfide bonds link Cys31–Cys54, Cys35–Cys56, Cys40–Cys57, Cys45–Cys60, Cys68–Cys82, Cys76–Cys87, Cys89–Cys107, and Cys96–Cys132. In terms of domain architecture, Kazal-like spans 76–134; the sequence is CGDSLECVRGVCRCRWTHTVCGTDGHTYADVCALQAASRRALQVSGTPVRQLQKGACPS. The tract at residues 181 to 347 is serine protease; sequence GSGFIMSEAG…IPSDRITRFL (167 aa). Active-site charge relay system residues include His197, Asp233, and Ser311. Residues 365-450 enclose the PDZ domain; that stretch reads IRMRTITPSL…EVRRGNDDLL (86 aa).

This sequence belongs to the peptidase S1C family. Homotrimer. Interacts with MYH9. Interacts with TGFB1; the interaction inhibits TGFB-mediated signaling. Interacts with BMP4; the interaction inhibits BMP4-mediated signaling. Interacts with TGFB2 and GDF5. Highest level of isoform 1 in maternal part of the placenta, moderate level in heart, testis and ovary, low level in muscle and lung. High expression found in granulosa cells of the ovary. Expressed in bone matrix, particularly in articular chondrocytes. Very low level of isoform 2 expressed in placenta. Expressed in the bone matrix, particularly in articular chondrocytes.

It localises to the secreted. Serine protease that cleaves beta-casein/CSN2 as well as several extracellular matrix (ECM) proteoglycans such as decorin/DCN, biglycan/BGN and fibronectin/FN1. Inhibits signaling mediated by TGF-beta family proteins possibly indirectly by degradation of these ECM proteoglycans. May act as a tumor suppressor. Negatively regulates, in vitro, trophoblast invasion during placental development and may be involved in the development of the placenta in vivo. May also have a role in ovarian development, granulosa cell differentiation and luteinization. The sequence is that of Serine protease HTRA3 (Htra3) from Mus musculus (Mouse).